Reading from the N-terminus, the 359-residue chain is Protein Wnt-8a (359 aa).

Residues 1-25 form the signal peptide; it reads MNPCQIFASLVMSICCHILSSTAWS. Cys-55 and Cys-66 are oxidised to a cystine. N-linked (GlcNAc...) asparagine glycosylation occurs at Asn-104. Intrachain disulfides connect Cys-105-Cys-113, Cys-115-Cys-133, Cys-181-Cys-195, Cys-183-Cys-190, Cys-260-Cys-298, Cys-276-Cys-291, Cys-295-Cys-337, Cys-313-Cys-328, Cys-315-Cys-325, and Cys-320-Cys-321. Residue Ser-187 is the site of O-palmitoleoyl serine attachment. Asn-263 and Asn-282 each carry an N-linked (GlcNAc...) asparagine glycan. A glycan (N-linked (GlcNAc...) asparagine) is linked at Asn-348.

Belongs to the Wnt family. In terms of processing, palmitoleoylation is required for efficient binding to frizzled receptors. Depalmitoleoylation leads to Wnt signaling pathway inhibition. Post-translationally, proteolytic processing by tiki1 and tiki2 promotes oxidation and formation of large disulfide-bond oligomers, leading to inactivation of wnt8. In terms of tissue distribution, expressed in the margin of the pregastrula embryo destined to be the future mesoderm.

It localises to the secreted. Its subcellular location is the extracellular space. The protein localises to the extracellular matrix. Ligand for members of the frizzled family of seven transmembrane receptors. Required for mesoderm and neural ectoderm patterning during gastrulation. Involved in axis formation during embryonic development, via activation of canonical Wnt/CTNNB1 signaling. May be involved in the specification of the spatial patterns of expression of Gsc and other regulatory genes leading to the establishment of the embryonic axis. The chain is Protein Wnt-8a (wnt8a) from Danio rerio (Zebrafish).